Here is a 200-residue protein sequence, read N- to C-terminus: Lipopolysaccharide core heptose(II)-phosphate phosphatase (200 aa).

Residues 1 to 25 (MLAFCRSSLKSKKYFIILLALAAIA) form the signal peptide.

It belongs to the phosphoglycerate mutase family. Ais subfamily.

The protein resides in the periplasm. It participates in bacterial outer membrane biogenesis; lipopolysaccharide metabolism. In terms of biological role, catalyzes the dephosphorylation of heptose(II) of the outer membrane lipopolysaccharide core. This is Lipopolysaccharide core heptose(II)-phosphate phosphatase from Escherichia coli O157:H7.